The primary structure comprises 565 residues: Proline--tRNA ligase (565 aa).

It belongs to the class-II aminoacyl-tRNA synthetase family. ProS type 1 subfamily. As to quaternary structure, homodimer.

It is found in the cytoplasm. It carries out the reaction tRNA(Pro) + L-proline + ATP = L-prolyl-tRNA(Pro) + AMP + diphosphate. Its function is as follows. Catalyzes the attachment of proline to tRNA(Pro) in a two-step reaction: proline is first activated by ATP to form Pro-AMP and then transferred to the acceptor end of tRNA(Pro). As ProRS can inadvertently accommodate and process non-cognate amino acids such as alanine and cysteine, to avoid such errors it has two additional distinct editing activities against alanine. One activity is designated as 'pretransfer' editing and involves the tRNA(Pro)-independent hydrolysis of activated Ala-AMP. The other activity is designated 'posttransfer' editing and involves deacylation of mischarged Ala-tRNA(Pro). The misacylated Cys-tRNA(Pro) is not edited by ProRS. This is Proline--tRNA ligase from Francisella tularensis subsp. holarctica (strain FTNF002-00 / FTA).